Reading from the N-terminus, the 138-residue chain is Type II secretion system protein I (138 aa).

Positions 1 to 6 (MKHQRG) are cleaved as a propeptide — leader sequence. At Tyr7 the chain carries N-methyltyrosine. The chain crosses the membrane as a helical span at residues 7-29 (YSLIEVIVAFALLALALTLLLGS).

This sequence belongs to the GSP I family. In terms of assembly, type II secretion is composed of four main components: the outer membrane complex, the inner membrane complex, the cytoplasmic secretion ATPase and the periplasm-spanning pseudopilus. Interacts with core component XpsG. In terms of processing, cleaved by prepilin peptidase. Post-translationally, methylated by prepilin peptidase at the amino group of the N-terminal tyrosine once the leader sequence is cleaved by prepilin peptidase.

Its subcellular location is the cell inner membrane. Functionally, component of the type II secretion system required for the energy-dependent secretion of extracellular factors such as proteases and toxins from the periplasm. Part of the pseudopilus tip complex that is critical for the recognition and binding of secretion substrates. This Xanthomonas campestris pv. campestris (strain ATCC 33913 / DSM 3586 / NCPPB 528 / LMG 568 / P 25) protein is Type II secretion system protein I (xpsI).